The chain runs to 122 residues: Small ribosomal subunit protein uS13 (122 aa).

The interval 91–122 is disordered; sequence RHRRGLPVHGQRTKTNARTRKGPKRTVAGKKK.

It belongs to the universal ribosomal protein uS13 family. In terms of assembly, part of the 30S ribosomal subunit. Forms a loose heterodimer with protein S19. Forms two bridges to the 50S subunit in the 70S ribosome.

Its function is as follows. Located at the top of the head of the 30S subunit, it contacts several helices of the 16S rRNA. In the 70S ribosome it contacts the 23S rRNA (bridge B1a) and protein L5 of the 50S subunit (bridge B1b), connecting the 2 subunits; these bridges are implicated in subunit movement. Contacts the tRNAs in the A and P-sites. The polypeptide is Small ribosomal subunit protein uS13 (Kocuria rhizophila (strain ATCC 9341 / DSM 348 / NBRC 103217 / DC2201)).